We begin with the raw amino-acid sequence, 707 residues long: ATP-dependent RNA helicase DHX33 (707 aa).

The tract at residues 1-64 is disordered; it reads MPEEAGFPPA…LAQPSASPYP (64 aa). The interval 1–80 is required for nucleolar location; it reads MPEEAGFPPA…RRSLPIFQAR (80 aa). Positions 39–49 are enriched in gly residues; that stretch reads GSGGRGGGGGR. Positions 50-64 are enriched in low complexity; that stretch reads RQQPPLAQPSASPYP. The 169-residue stretch at 84–252 folds into the Helicase ATP-binding domain; sequence LAQLRNLDNA…FNGAPVLYLE (169 aa). Position 97–104 (97–104) interacts with ATP; it reads GETGSGKT. The DEAH box motif lies at 194–197; sequence DEAH. In terms of domain architecture, Helicase C-terminal spans 277-450; that stretch reads SVFQIHQEAP…SVMLQLLAMK (174 aa). Residues 471-562 form an HA2; required for interaction with EIF3G and RPL26 region; that stretch reads AIAQLDLLGA…ISSEGDHMTL (92 aa). Residues 547–558 carry the Critical for rDNA-binding motif; that stretch reads GVRKKFISSEGD.

It belongs to the DEAD box helicase family. DEAH subfamily. In terms of assembly, interacts with UBTF. Interacts with DDX3X, EIF3G and EIF3H; the interaction is independent of RNA. Interacts (via HA2 region and Helicase C-terminal domain) with the components of the large ribosomal subunit RPL3, RPL7, RPL26 and RPL27. Interacts (via DEAH box) with NLRP3 (via NACHT domain). Binds to mRNA. Binds to double-stranded RNA (via the helicase C-terminal domain). Interacts (via the helicase C-terminal domain) with MAVS. Ubiquitinated, leading to its degradation by the proteasome. Deubiquitinated by USP36.

It localises to the nucleus. It is found in the nucleolus. The protein localises to the nucleoplasm. The protein resides in the cytoplasm. Its subcellular location is the inflammasome. The enzyme catalyses ATP + H2O = ADP + phosphate + H(+). Implicated in nucleolar organization, ribosome biogenesis, protein synthesis and cytoplasmic dsRNA sensing. Stimulates RNA polymerase I transcription of the 47S precursor rRNA. Associates with ribosomal DNA (rDNA) loci where it is involved in POLR1A recruitment. In the cytoplasm, promotes elongation-competent 80S ribosome assembly at the late stage of mRNA translation initiation. Senses cytosolic dsRNA mediating NLRP3 inflammasome formation in macrophages and type I interferon production in myeloid dendritic cells. Required for NLRP3 activation induced by viral dsRNA and bacterial RNA. In dendritic cells, required for induction of type I interferon production induced by cytoplasmic dsRNA via the activation of MAPK and NF-kappa-B signaling pathways. The polypeptide is ATP-dependent RNA helicase DHX33 (Homo sapiens (Human)).